A 366-amino-acid chain; its full sequence is Phospho-2-dehydro-3-deoxyheptonate aldolase (366 aa).

The protein belongs to the class-I DAHP synthase family.

It carries out the reaction D-erythrose 4-phosphate + phosphoenolpyruvate + H2O = 7-phospho-2-dehydro-3-deoxy-D-arabino-heptonate + phosphate. The protein operates within metabolic intermediate biosynthesis; chorismate biosynthesis; chorismate from D-erythrose 4-phosphate and phosphoenolpyruvate: step 1/7. Functionally, stereospecific condensation of phosphoenolpyruvate (PEP) and D-erythrose-4-phosphate (E4P) giving rise to 3-deoxy-D-arabino-heptulosonate-7-phosphate (DAHP). In Corynebacterium glutamicum (strain ATCC 13032 / DSM 20300 / JCM 1318 / BCRC 11384 / CCUG 27702 / LMG 3730 / NBRC 12168 / NCIMB 10025 / NRRL B-2784 / 534), this protein is Phospho-2-dehydro-3-deoxyheptonate aldolase (aroG).